The following is an 84-amino-acid chain: Small ribosomal subunit protein uS17 (84 aa).

It belongs to the universal ribosomal protein uS17 family. In terms of assembly, part of the 30S ribosomal subunit.

One of the primary rRNA binding proteins, it binds specifically to the 5'-end of 16S ribosomal RNA. The polypeptide is Small ribosomal subunit protein uS17 (Pectobacterium atrosepticum (strain SCRI 1043 / ATCC BAA-672) (Erwinia carotovora subsp. atroseptica)).